A 304-amino-acid chain; its full sequence is Nod factor export ATP-binding protein I (304 aa).

In terms of domain architecture, ABC transporter spans 6–236; that stretch reads IDFRNVEKRY…EIGCDVIEIY (231 aa). ATP is bound at residue 38–45; that stretch reads GPNGAGKT.

Belongs to the ABC transporter superfamily. Lipooligosaccharide exporter (TC 3.A.1.102) family. As to quaternary structure, the complex is composed of two ATP-binding proteins (NodI) and two transmembrane proteins (NodJ).

The protein localises to the cell inner membrane. Part of the ABC transporter complex NodIJ involved in the export of the nodulation factors (Nod factors), the bacterial signal molecules that induce symbiosis and subsequent nodulation induction. Nod factors are LCO (lipo-chitin oligosaccharide), a modified beta-1,4-linked N-acetylglucosamine oligosaccharide. This subunit is responsible for energy coupling to the transport system. This is Nod factor export ATP-binding protein I from Burkholderia orbicola (strain AU 1054).